Here is a 492-residue protein sequence, read N- to C-terminus: Cytochrome P450 26A1 (492 aa).

Cys-438 provides a ligand contact to heme.

The protein belongs to the cytochrome P450 family. Requires heme as cofactor.

It localises to the endoplasmic reticulum membrane. The protein localises to the microsome membrane. It carries out the reaction all-trans-retinoate + reduced [NADPH--hemoprotein reductase] + O2 = all-trans-(4S)-hydroxyretinoate + oxidized [NADPH--hemoprotein reductase] + H2O + H(+). A cytochrome P450 monooxygenase involved in the metabolism of all-trans retinoic acid (atRA), a signaling molecule that binds to retinoic acid receptors and regulates gene transcription. Mechanistically, uses molecular oxygen inserting one oxygen atom into a substrate, and reducing the second into a water molecule, with two electrons provided by NADPH via cytochrome P450 reductase (CPR; NADPH-ferrihemoprotein reductase). Catalyzes the hydroxylation of carbon hydrogen bonds of atRA primarily at C-4. Has no activity toward 9-cis and 13-cis retinoic acid stereoisomers. May play a role in the oxidative metabolism of xenobiotics such as tazarotenic acid. The sequence is that of Cytochrome P450 26A1 (cyp26a1) from Danio rerio (Zebrafish).